The chain runs to 142 residues: Transcription antitermination protein NusB (142 aa).

This sequence belongs to the NusB family.

Involved in transcription antitermination. Required for transcription of ribosomal RNA (rRNA) genes. Binds specifically to the boxA antiterminator sequence of the ribosomal RNA (rrn) operons. The sequence is that of Transcription antitermination protein NusB from Thermobifida fusca (strain YX).